The primary structure comprises 481 residues: Cis-aconitate decarboxylase (481 aa).

The disordered stretch occupies residues 462–481 (SPPEVASNSPACNNSITNLS). The span at 467–481 (ASNSPACNNSITNLS) shows a compositional bias: polar residues.

This sequence belongs to the PrpD family. As to quaternary structure, homodimer. Expressed in LPS-tolerized macrophages (at protein level). Expressed in peripheral blood mononuclear cells (PBMCs), microglia and macrophage cells.

It is found in the mitochondrion. It carries out the reaction cis-aconitate + H(+) = itaconate + CO2. Functionally, cis-aconitate decarboxylase that catalyzes production of itaconate and is involved in the inhibition of the inflammatory response. Acts as a negative regulator of the Toll-like receptors (TLRs)-mediated inflammatory innate response by stimulating the tumor necrosis factor alpha-induced protein TNFAIP3 expression via reactive oxygen species (ROS) in LPS-tolerized macrophages. Involved in antimicrobial response of innate immune cells; ACOD1-mediated itaconic acid production contributes to the antimicrobial activity of macrophages by generating itaconate, leading to alkylation of proteins, such as TFEB. Involved in antiviral response following infection by flavivirus in neurons: ACOD1-mediated itaconate production inhibits the activity of succinate dehydrogenase, generating a metabolic state in neurons that suppresses replication of viral genomes. Plays a role in the embryo implantation. This is Cis-aconitate decarboxylase from Homo sapiens (Human).